The following is a 455-amino-acid chain: Probable 1,4-beta-D-glucan cellobiohydrolase A (455 aa).

Residues 1 to 17 form the signal peptide; the sequence is MHQRALLFSAFWTAVQA. Asparagine 81 carries N-linked (GlcNAc...) asparagine glycosylation. The Nucleophile role is filled by glutamate 227. Residue glutamate 232 is the Proton donor of the active site. The N-linked (GlcNAc...) asparagine glycan is linked to asparagine 285.

The protein belongs to the glycosyl hydrolase 7 (cellulase C) family.

Its subcellular location is the secreted. The catalysed reaction is Hydrolysis of (1-&gt;4)-beta-D-glucosidic linkages in cellulose and cellotetraose, releasing cellobiose from the non-reducing ends of the chains.. Its function is as follows. The biological conversion of cellulose to glucose generally requires three types of hydrolytic enzymes: (1) Endoglucanases which cut internal beta-1,4-glucosidic bonds; (2) Exocellobiohydrolases that cut the disaccharide cellobiose from the non-reducing end of the cellulose polymer chain; (3) Beta-1,4-glucosidases which hydrolyze the cellobiose and other short cello-oligosaccharides to glucose. The sequence is that of Probable 1,4-beta-D-glucan cellobiohydrolase A (cbhA) from Aspergillus flavus (strain ATCC 200026 / FGSC A1120 / IAM 13836 / NRRL 3357 / JCM 12722 / SRRC 167).